The following is a 409-amino-acid chain: uncharacterized protein (409 aa).

Residue histidine 46 coordinates Zn(2+). The active-site Proton acceptor is glutamate 49. Histidine 50 and glutamate 126 together coordinate Zn(2+).

The protein belongs to the peptidase M16 family. Requires Zn(2+) as cofactor.

This is an uncharacterized protein from Bacillus subtilis (strain 168).